Reading from the N-terminus, the 449-residue chain is UNC93-like protein MFSD11 (449 aa).

A helical membrane pass occupies residues 8–28; the sequence is LFNIIILGVAFMFMFTAFQTC. The N-linked (GlcNAc...) asparagine glycan is linked to Asn-40. 5 consecutive transmembrane segments (helical) span residues 53–73, 74–94, 96–116, 138–158, and 170–190; these read AIIY…VAIV, GPQL…AVFI, PFPW…AVLW, IFWA…YFAW, and RTVF…FFLI. Ser-204 carries the phosphoserine modification. 6 helical membrane passes run 239–259, 277–297, 309–329, 359–379, 385–405, and 410–430; these read MLLL…FSGV, LIGL…SLFG, PVVL…FLNM, FLLG…LGFL, APAF…AFFY, and LLHW…ISFF.

This sequence belongs to the unc-93 family.

The protein resides in the membrane. The polypeptide is UNC93-like protein MFSD11 (MFSD11) (Homo sapiens (Human)).